A 495-amino-acid chain; its full sequence is Geraniol 8-hydroxylase (495 aa).

The helical transmembrane segment at 5-25 threads the bilayer; sequence FLTIAIGFLFTITLYQALNFF. Cys-438 lines the heme pocket.

Belongs to the cytochrome P450 family. It depends on heme as a cofactor. As to expression, expressed in leaves, stems and roots.

It is found in the endoplasmic reticulum membrane. The catalysed reaction is (2E)-geraniol + reduced [NADPH--hemoprotein reductase] + O2 = (6E)-8-hydroxygeraniol + oxidized [NADPH--hemoprotein reductase] + H2O + H(+). In terms of biological role, hydroxylase involved in the biosynthesis of hydroxygeraniol, a precursor of the iridoid monoterpenoid swertiamarin. This chain is Geraniol 8-hydroxylase (CYP76B10), found in Swertia mussotii (Felwort).